A 226-amino-acid polypeptide reads, in one-letter code: Glutathione peroxidase 3 (226 aa).

Residues 1–24 form the signal peptide; the sequence is MARLLQASCLLSLLLAGFLPQSRG. U73 is an active-site residue. Residue U73 is a non-standard amino acid, selenocysteine.

The protein belongs to the glutathione peroxidase family. Homotetramer. Secreted in plasma.

Its subcellular location is the secreted. The catalysed reaction is 2 glutathione + H2O2 = glutathione disulfide + 2 H2O. It catalyses the reaction tert-butyl hydroperoxide + 2 glutathione = tert-butanol + glutathione disulfide + H2O. In terms of biological role, protects cells and enzymes from oxidative damage, by catalyzing the reduction of hydrogen peroxide, lipid peroxides and organic hydroperoxide, by glutathione. This chain is Glutathione peroxidase 3, found in Sapajus apella (Brown-capped capuchin).